We begin with the raw amino-acid sequence, 1043 residues long: tRNA wybutosine-synthesizing protein 2/3/4 (1043 aa).

The segment at 1-233 (MEFDRRKAAA…PVLQNGAKHG (233 aa)) is tRNA wybutosine-synthesizing protein 3 homolog. A disordered region spans residues 53 to 75 (RVSVLAQPPPPQQADPGGAKTKK). Kelch repeat units follow at residues 360-410 (DIYV…AVDR), 412-460 (VYVF…SYGS), 461-510 (KLFL…IYKD), and 512-559 (LGIL…VIID). Positions 700 to 1041 (QPDDSCVFEE…RHLVVDVKCR (342 aa)) are tRNA wybutosine-synthesizing protein 2 homolog. S-adenosyl-L-methionine is bound by residues lysine 874 and 942–943 (DN).

In the C-terminal section; belongs to the class I-like SAM-binding methyltransferase superfamily. TRM5/TYW2 family. The protein in the N-terminal section; belongs to the TYW3 family.

The enzyme catalyses 4-demethyl-7-[(3S)-3-amino-3-carboxypropyl]wyosine(37) in tRNA(Phe) + S-adenosyl-L-methionine = 7-[(3S)-3-amino-3-carboxypropyl]wyosine(37) in tRNA(Phe) + S-adenosyl-L-homocysteine + H(+). It catalyses the reaction 4-demethylwyosine(37) in tRNA(Phe) + S-adenosyl-L-methionine = 4-demethyl-7-[(3S)-3-amino-3-carboxypropyl]wyosine(37) in tRNA(Phe) + S-methyl-5'-thioadenosine + H(+). Its pathway is tRNA modification; wybutosine-tRNA(Phe) biosynthesis. In terms of biological role, S-adenosyl-L-methionine-dependent transferase that acts as a component of the wybutosine biosynthesis pathway. Wybutosine is a hyper modified guanosine with a tricyclic base found at the 3'-position adjacent to the anticodon of eukaryotic phenylalanine tRNA. This is tRNA wybutosine-synthesizing protein 2/3/4 from Oryza sativa subsp. japonica (Rice).